The primary structure comprises 128 residues: MFAKTLASLAVIGSAAAYVPMMSMDMGRREVVQAGAAAAAVTPFLSGAPAGAAMDKSAKAPQITIFDHRGCSRAPKESTGGKAGGQDDEMMVKVASTKVTVSESDAAKKLQEFITFEKGIDGPFTSKN.

Residues 1 to 52 (MFAKTLASLAVIGSAAAYVPMMSMDMGRREVVQAGAAAAAVTPFLSGAPAGA) constitute a chloroplast transit peptide. A 5-hydroxylysine modification is found at Lys-56. Residues 70 to 89 (GCSRAPKESTGGKAGGQDDE) form a disordered region. 15,16-dihydrobiliverdin contacts are provided by residues Cys-71, Arg-73, 77 to 78 (ES), and Lys-93.

Belongs to the phycoerythrin family. As to quaternary structure, heterotetramer of 2 different alpha chains and 2 identical beta chains. The subunit composition could comprise of any combination of 2 out of 4 different alpha units with an invariant beta unit. Post-translationally, contains one covalently linked 15,16-dihydrobiliverdin chromophore.

The protein resides in the plastid. It localises to the chloroplast thylakoid membrane. Light-harvesting photosynthetic tetrapyrrole chromophore-protein from the phycobiliprotein complex. This Rhodomonas sp. (strain CS 24) (Chroomonas sp. (strain CS24)) protein is Phycoerythrin alpha-3 chain, chloroplastic (cpeA3).